The primary structure comprises 127 residues: Large ribosomal subunit protein eL8 (127 aa).

The protein belongs to the eukaryotic ribosomal protein eL8 family. As to quaternary structure, part of the 50S ribosomal subunit. Component of box C/D small ribonucleoprotein (sRNP) particles that contain rpl7ae, FlpA and nop5, plus a guide RNA. These sRNP particles form homodimers, giving rise to an asymmetric holoenzyme. Probably part of the RNase P complex.

It is found in the cytoplasm. In terms of biological role, multifunctional RNA-binding protein that recognizes the K-turn motif in ribosomal RNA, the RNA component of RNase P, box H/ACA, box C/D and box C'/D' sRNAs. This chain is Large ribosomal subunit protein eL8, found in Saccharolobus solfataricus (strain ATCC 35092 / DSM 1617 / JCM 11322 / P2) (Sulfolobus solfataricus).